The following is a 260-amino-acid chain: Thiazole synthase (260 aa).

The Schiff-base intermediate with DXP role is filled by Lys96. 1-deoxy-D-xylulose 5-phosphate contacts are provided by residues Gly157, 184 to 185 (AG), and 206 to 207 (NT).

Belongs to the ThiG family. In terms of assembly, homotetramer. Forms heterodimers with either ThiH or ThiS.

The protein resides in the cytoplasm. The enzyme catalyses [ThiS sulfur-carrier protein]-C-terminal-Gly-aminoethanethioate + 2-iminoacetate + 1-deoxy-D-xylulose 5-phosphate = [ThiS sulfur-carrier protein]-C-terminal Gly-Gly + 2-[(2R,5Z)-2-carboxy-4-methylthiazol-5(2H)-ylidene]ethyl phosphate + 2 H2O + H(+). The protein operates within cofactor biosynthesis; thiamine diphosphate biosynthesis. In terms of biological role, catalyzes the rearrangement of 1-deoxy-D-xylulose 5-phosphate (DXP) to produce the thiazole phosphate moiety of thiamine. Sulfur is provided by the thiocarboxylate moiety of the carrier protein ThiS. In vitro, sulfur can be provided by H(2)S. This Rhodopseudomonas palustris (strain ATCC BAA-98 / CGA009) protein is Thiazole synthase.